Reading from the N-terminus, the 965-residue chain is PWWP domain-containing protein 4 (965 aa).

Residues 135-196 (VGDMVWGKVK…PAELIPFEPH (62 aa)) form the PWWP domain. A compositionally biased stretch (polar residues) spans 437–455 (MNFTSSSGNIPGKKSSVSK). 4 disordered regions span residues 437 to 507 (MNFT…KSSL), 526 to 577 (VVKR…KSSQ), 649 to 708 (SAKT…SLAP), and 905 to 927 (LSSQDSEPKPVNNQVDHVEPPLD). Basic and acidic residues-rich tracts occupy residues 456–474 (LSRDDDKGLAQESDVRMGE) and 481–495 (DQEKFEPMKSLKQDE). Residues 496 to 507 (TGTNSRSNKSSL) show a composition bias toward polar residues. A Nuclear localization signal motif is present at residues 546–553 (KKKEYVSE). Residues 549-563 (EYVSELNRDTPDKRK) show a composition bias toward basic and acidic residues. A compositionally biased stretch (polar residues) spans 657–676 (NEQSKAGRNRISSDSQQDVP). The span at 691 to 702 (ASDKKTNQDATK) shows a compositional bias: basic and acidic residues. Positions 905-919 (LSSQDSEPKPVNNQV) are enriched in polar residues.

It belongs to the PDP family. In terms of assembly, component of the PRC2 (polycomb repressive complex 2) complex which regulates histone methylation on histone H3K27.

The protein resides in the nucleus. May influence gene expression by regulating the function of the PRC2 complex and modulating H3K27me3 level. The sequence is that of PWWP domain-containing protein 4 from Arabidopsis thaliana (Mouse-ear cress).